The following is a 286-amino-acid chain: Phosphatidylserine decarboxylase proenzyme (286 aa).

Catalysis depends on charge relay system; for autoendoproteolytic cleavage activity residues Asp90, His147, and Ser252. The active-site Schiff-base intermediate with substrate; via pyruvic acid; for decarboxylase activity is Ser252. Ser252 carries the pyruvic acid (Ser); by autocatalysis modification.

This sequence belongs to the phosphatidylserine decarboxylase family. PSD-B subfamily. Prokaryotic type I sub-subfamily. As to quaternary structure, heterodimer of a large membrane-associated beta subunit and a small pyruvoyl-containing alpha subunit. It depends on pyruvate as a cofactor. Post-translationally, is synthesized initially as an inactive proenzyme. Formation of the active enzyme involves a self-maturation process in which the active site pyruvoyl group is generated from an internal serine residue via an autocatalytic post-translational modification. Two non-identical subunits are generated from the proenzyme in this reaction, and the pyruvate is formed at the N-terminus of the alpha chain, which is derived from the carboxyl end of the proenzyme. The autoendoproteolytic cleavage occurs by a canonical serine protease mechanism, in which the side chain hydroxyl group of the serine supplies its oxygen atom to form the C-terminus of the beta chain, while the remainder of the serine residue undergoes an oxidative deamination to produce ammonia and the pyruvoyl prosthetic group on the alpha chain. During this reaction, the Ser that is part of the protease active site of the proenzyme becomes the pyruvoyl prosthetic group, which constitutes an essential element of the active site of the mature decarboxylase.

The protein resides in the cell membrane. It carries out the reaction a 1,2-diacyl-sn-glycero-3-phospho-L-serine + H(+) = a 1,2-diacyl-sn-glycero-3-phosphoethanolamine + CO2. It participates in phospholipid metabolism; phosphatidylethanolamine biosynthesis; phosphatidylethanolamine from CDP-diacylglycerol: step 2/2. Its function is as follows. Catalyzes the formation of phosphatidylethanolamine (PtdEtn) from phosphatidylserine (PtdSer). In Ectopseudomonas mendocina (strain ymp) (Pseudomonas mendocina), this protein is Phosphatidylserine decarboxylase proenzyme.